Reading from the N-terminus, the 539-residue chain is Tyrosinase (539 aa).

Residues His63, His84, His93, His290, His294, and His333 each coordinate Cu cation. Residues 82-84 (CHH) constitute a cross-link (2'-(S-cysteinyl)-histidine (Cys-His)).

It belongs to the tyrosinase family. As to quaternary structure, homotetramer. Requires Cu(2+) as cofactor. Post-translationally, the N-terminus is blocked.

It carries out the reaction 2 L-dopa + O2 = 2 L-dopaquinone + 2 H2O. The catalysed reaction is L-tyrosine + O2 = L-dopaquinone + H2O. With respect to regulation, activated by acidifying treatment at pH 3.0. Its function is as follows. This is a copper-containing oxidase that functions in the formation of pigments such as melanins and other polyphenolic compounds. The polypeptide is Tyrosinase (melO) (Aspergillus oryzae (strain ATCC 42149 / RIB 40) (Yellow koji mold)).